A 342-amino-acid polypeptide reads, in one-letter code: Tetraacyldisaccharide 4'-kinase (342 aa).

Position 68 to 75 (68 to 75 (TVGGTGKT)) interacts with ATP.

The protein belongs to the LpxK family.

It carries out the reaction a lipid A disaccharide + ATP = a lipid IVA + ADP + H(+). It functions in the pathway glycolipid biosynthesis; lipid IV(A) biosynthesis; lipid IV(A) from (3R)-3-hydroxytetradecanoyl-[acyl-carrier-protein] and UDP-N-acetyl-alpha-D-glucosamine: step 6/6. Its function is as follows. Transfers the gamma-phosphate of ATP to the 4'-position of a tetraacyldisaccharide 1-phosphate intermediate (termed DS-1-P) to form tetraacyldisaccharide 1,4'-bis-phosphate (lipid IVA). The polypeptide is Tetraacyldisaccharide 4'-kinase (Burkholderia thailandensis (strain ATCC 700388 / DSM 13276 / CCUG 48851 / CIP 106301 / E264)).